Reading from the N-terminus, the 503-residue chain is Trehalose-6-phosphate synthase (503 aa).

D-glucose 6-phosphate is bound at residue arginine 22. 42-43 (GG) lines the UDP-alpha-D-glucose pocket. D-glucose 6-phosphate is bound by residues tyrosine 94 and aspartate 148. Residues arginine 290 and lysine 295 each contribute to the UDP-alpha-D-glucose site. Arginine 328 contacts D-glucose 6-phosphate. Position 393–397 (393–397 (LVAKE)) interacts with UDP-alpha-D-glucose. The tract at residues 481 to 503 (GETGDSGVTGESTPAPESDSGSF) is disordered.

Belongs to the glycosyltransferase 20 family. In terms of assembly, homotetramer.

It carries out the reaction ADP-alpha-D-glucose + D-glucose 6-phosphate = alpha,alpha-trehalose 6-phosphate + ADP + H(+). It catalyses the reaction CDP-alpha-D-glucose + D-glucose 6-phosphate = alpha,alpha-trehalose 6-phosphate + CDP + H(+). The catalysed reaction is GDP-alpha-D-glucose + D-glucose 6-phosphate = alpha,alpha-trehalose 6-phosphate + GDP + H(+). The enzyme catalyses TDP-alpha-D-glucose + D-glucose 6-phosphate = 5-methyl-UDP + alpha,alpha-trehalose 6-phosphate + H(+). It carries out the reaction D-glucose 6-phosphate + UDP-alpha-D-glucose = alpha,alpha-trehalose 6-phosphate + UDP + H(+). It participates in glycan biosynthesis; trehalose biosynthesis. Its activity is regulated as follows. Stimulated by the polynucleotide FII (physiological activator), and by chondroitin sulfate (CS) and heparin. Activation by the polyanion is inhibited by high salt concentration as well as by high concentrations of mononucleoside phosphates. Functionally, involved in the production of glycogen and alpha-glucan via the TreS-Pep2 branch involved in the biosynthesis of maltose-1-phosphate (M1P), and probably in the osmoprotection via the biosynthesis of trehalose. Catalyzes the transfer of glucose from UDP-glucose (UDP-Glc) to glucose-6-phosphate (Glc-6-P) to form trehalose-6-phosphate. ADP-Glc, CDP-Glc, GDP-Glc and TDP-Glc are also glucosyl donors, however, when the pyrimidine sugar nucleotides (CDP-Glc, TDP-Glc and UDP-Glc) are used as substrates, there is an absolute requirement for a high molecular weight polyanion for activity. This chain is Trehalose-6-phosphate synthase, found in Mycolicibacterium smegmatis (strain ATCC 700084 / mc(2)155) (Mycobacterium smegmatis).